The chain runs to 222 residues: Superoxide dismutase [Mn], mitochondrial (222 aa).

The transit peptide at 1–24 directs the protein to the mitochondrion; that stretch reads MLSRAACSTSRRLVPALSVLGSRQ. His-50 is a binding site for Mn(2+). Position 58 is a 3'-nitrotyrosine (Tyr-58). Residues Lys-68 and Lys-75 each carry the N6-acetyllysine; alternate modification. N6-succinyllysine; alternate is present on residues Lys-68 and Lys-75. Position 98 (His-98) interacts with Mn(2+). N6-acetyllysine; alternate is present on residues Lys-122 and Lys-130. Residues Lys-122 and Lys-130 each carry the N6-succinyllysine; alternate modification. Residues Asp-183 and His-187 each coordinate Mn(2+). Lys-202 is subject to N6-acetyllysine.

The protein belongs to the iron/manganese superoxide dismutase family. Homotetramer. Mn(2+) serves as cofactor. Nitrated under oxidative stress. Nitration coupled with oxidation inhibits the catalytic activity. Post-translationally, acetylation at Lys-122 decreases enzymatic activity. Deacetylated by SIRT3 upon exposure to ionizing radiations or after long fasting. In terms of processing, polyubiquitinated; leading to proteasomal degradation. Deubiquitinated by USP36 which increases protein stability.

It is found in the mitochondrion matrix. The enzyme catalyses 2 superoxide + 2 H(+) = H2O2 + O2. Functionally, destroys superoxide anion radicals which are normally produced within the cells and which are toxic to biological systems. In Bos taurus (Bovine), this protein is Superoxide dismutase [Mn], mitochondrial (SOD2).